Here is a 119-residue protein sequence, read N- to C-terminus: Evasin P983 (119 aa).

The signal sequence occupies residues 1–21 (MKASFCVIASCLVVFALKGTA). 4 disulfides stabilise this stretch: Cys37/Cys59, Cys55/Cys97, Cys72/Cys102, and Cys92/Cys111. N-linked (GlcNAc...) asparagine glycosylation is found at Asn48 and Asn67.

It is found in the secreted. In terms of biological role, salivary chemokine-binding protein which binds to host chemokines CCL2, CCL3 and CCL8. The polypeptide is Evasin P983 (Amblyomma cajennense (Cayenne tick)).